The primary structure comprises 129 residues: MKQKIIGLTLAFFVLFLTAVAILFTVKVQRYLTTSLWAKLSEQTFLVFKNEQDEAQFNQVSWTNFQAETTKKEDKKAFRLYKKKISLEQLENENQQQLFQAVNLSINLKQGWYNITILLPSKALFETVF.

The helical transmembrane segment at 5–25 (IIGLTLAFFVLFLTAVAILFT) threads the bilayer.

The protein resides in the membrane. This is an uncharacterized protein from Mycoplasma pneumoniae (strain ATCC 29342 / M129 / Subtype 1) (Mycoplasmoides pneumoniae).